A 535-amino-acid polypeptide reads, in one-letter code: Thermosome subunit gamma (535 aa).

The protein belongs to the TCP-1 chaperonin family. Forms a heterooligomeric complex of two stacked nine-membered rings; one of alpha and the other of beta subunits.

It localises to the cytoplasm. The enzyme catalyses ATP + H2O = ADP + phosphate + H(+). In terms of biological role, molecular chaperone; binds unfolded polypeptides in vitro, and has a weak ATPase activity. In Saccharolobus shibatae (strain ATCC 51178 / DSM 5389 / JCM 8931 / NBRC 15437 / B12) (Sulfolobus shibatae), this protein is Thermosome subunit gamma (thsC).